Here is a 53-residue protein sequence, read N- to C-terminus: Conotoxin Cal9.2e (53 aa).

Residues 1–6 constitute a propeptide that is removed on maturation; that stretch reads KKGVTQ. 3 disulfide bridges follow: Cys-15/Cys-32, Cys-20/Cys-42, and Cys-22/Cys-47.

In terms of tissue distribution, expressed by the venom duct.

The protein resides in the secreted. In terms of biological role, probable neurotoxin with unknown target. Possibly targets ion channels. The sequence is that of Conotoxin Cal9.2e from Californiconus californicus (California cone).